The chain runs to 133 residues: U-scoloptoxin(05)-Sa1a (133 aa).

Positions 1-24 (MPSLCIIALFGTLTFYTLIPSIHT) are cleaved as a signal peptide.

Belongs to the scoloptoxin-05 family. Contains 5 disulfide bonds. Expressed by the venom gland.

Its subcellular location is the secreted. This chain is U-scoloptoxin(05)-Sa1a, found in Scolopendra alternans (Florida Keys giant centipede).